Reading from the N-terminus, the 681-residue chain is Potassium-transporting ATPase ATP-binding subunit (681 aa).

4 consecutive transmembrane segments (helical) span residues 30 to 50, 59 to 79, 216 to 236, and 255 to 275; these read LLVY…FFGI, LAIA…EAIA, ILLV…LPFT, and IALL…SIGI. Residue D306 is the 4-aspartylphosphate intermediate of the active site. ATP is bound by residues D343, E347, 376–383, and K394; that span reads FTATTRMS. Residues D517 and D521 each coordinate Mg(2+). A run of 3 helical transmembrane segments spans residues 587–607, 615–635, and 661–681; these read FAII…LNLM, AILS…PLSL, and LIAP…LGIV.

The protein belongs to the cation transport ATPase (P-type) (TC 3.A.3) family. Type IA subfamily. In terms of assembly, the system is composed of three essential subunits: KdpA, KdpB and KdpC.

It is found in the cell membrane. It carries out the reaction K(+)(out) + ATP + H2O = K(+)(in) + ADP + phosphate + H(+). Functionally, part of the high-affinity ATP-driven potassium transport (or Kdp) system, which catalyzes the hydrolysis of ATP coupled with the electrogenic transport of potassium into the cytoplasm. This subunit is responsible for energy coupling to the transport system and for the release of the potassium ions to the cytoplasm. This Listeria monocytogenes serovar 1/2a (strain ATCC BAA-679 / EGD-e) protein is Potassium-transporting ATPase ATP-binding subunit.